The sequence spans 102 residues: Monothiol glutaredoxin-S6 (102 aa).

A Glutaredoxin domain is found at 1 to 101 (MESVRSLVED…AMLRRAGAIW (101 aa)). C21 lines the [2Fe-2S] cluster pocket.

The protein belongs to the glutaredoxin family. CC-type subfamily.

The protein localises to the cytoplasm. Functionally, may only reduce GSH-thiol disulfides, but not protein disulfides. This chain is Monothiol glutaredoxin-S6 (GRXS6), found in Arabidopsis thaliana (Mouse-ear cress).